Here is an 88-residue protein sequence, read N- to C-terminus: uncharacterized protein (88 aa).

This is an uncharacterized protein from Escherichia coli (strain K12).